A 318-amino-acid polypeptide reads, in one-letter code: L-lactate dehydrogenase (318 aa).

Residues valine 20, aspartate 41, lysine 46, tyrosine 71, and 85–86 (GA) contribute to the NAD(+) site. Substrate-binding positions include glutamine 88, arginine 94, and 126-129 (NPVD). NAD(+) contacts are provided by residues 124–126 (ATN) and serine 149. Residue 154–157 (DTAR) coordinates substrate. Residues arginine 159 and histidine 174 each contribute to the beta-D-fructose 1,6-bisphosphate site. Histidine 181 functions as the Proton acceptor in the catalytic mechanism. The residue at position 226 (tyrosine 226) is a Phosphotyrosine. Threonine 235 is a substrate binding site.

It belongs to the LDH/MDH superfamily. LDH family. In terms of assembly, homotetramer.

It is found in the cytoplasm. It catalyses the reaction (S)-lactate + NAD(+) = pyruvate + NADH + H(+). The protein operates within fermentation; pyruvate fermentation to lactate; (S)-lactate from pyruvate: step 1/1. Its activity is regulated as follows. Allosterically activated by fructose 1,6-bisphosphate (FBP). Its function is as follows. Catalyzes the conversion of lactate to pyruvate. This Priestia megaterium (Bacillus megaterium) protein is L-lactate dehydrogenase.